A 438-amino-acid chain; its full sequence is Phosphoribosylamine--glycine ligase (438 aa).

Positions 108 to 316 (RTFMERNEIP…LLEVAEGIVD (209 aa)) constitute an ATP-grasp domain. Residue 135-194 (VDDFGRPVVVKPIGLTGGKGVKVVGYQLRDNEEAKSYAEELIRRDGRVLIEERTNGVEFT) participates in ATP binding. Residues glutamine 274, glutamate 286, and asparagine 288 each coordinate Mg(2+). Mn(2+) contacts are provided by glutamine 274, glutamate 286, and asparagine 288.

It belongs to the GARS family. Mg(2+) is required as a cofactor. It depends on Mn(2+) as a cofactor.

The catalysed reaction is 5-phospho-beta-D-ribosylamine + glycine + ATP = N(1)-(5-phospho-beta-D-ribosyl)glycinamide + ADP + phosphate + H(+). The protein operates within purine metabolism; IMP biosynthesis via de novo pathway; N(1)-(5-phospho-D-ribosyl)glycinamide from 5-phospho-alpha-D-ribose 1-diphosphate: step 2/2. The polypeptide is Phosphoribosylamine--glycine ligase (Thermococcus gammatolerans (strain DSM 15229 / JCM 11827 / EJ3)).